The chain runs to 511 residues: 2-isopropylmalate synthase (511 aa).

The 264-residue stretch at 6–269 (IIIFDTTLRD…YTDIKCENIF (264 aa)) folds into the Pyruvate carboxyltransferase domain. Mn(2+) contacts are provided by aspartate 15, histidine 203, histidine 205, and asparagine 239. Positions 394-511 (VIEKLSVISG…SLKVEERKMA (118 aa)) are regulatory domain.

Belongs to the alpha-IPM synthase/homocitrate synthase family. LeuA type 1 subfamily. In terms of assembly, homodimer. The cofactor is Mn(2+).

The protein resides in the cytoplasm. It catalyses the reaction 3-methyl-2-oxobutanoate + acetyl-CoA + H2O = (2S)-2-isopropylmalate + CoA + H(+). The protein operates within amino-acid biosynthesis; L-leucine biosynthesis; L-leucine from 3-methyl-2-oxobutanoate: step 1/4. In terms of biological role, catalyzes the condensation of the acetyl group of acetyl-CoA with 3-methyl-2-oxobutanoate (2-ketoisovalerate) to form 3-carboxy-3-hydroxy-4-methylpentanoate (2-isopropylmalate). This is 2-isopropylmalate synthase from Campylobacter jejuni subsp. jejuni serotype O:23/36 (strain 81-176).